Here is a 287-residue protein sequence, read N- to C-terminus: Elongation factor Ts (287 aa).

The tract at residues 80–83 (TDFL) is involved in Mg(2+) ion dislocation from EF-Tu.

The protein belongs to the EF-Ts family.

The protein resides in the cytoplasm. In terms of biological role, associates with the EF-Tu.GDP complex and induces the exchange of GDP to GTP. It remains bound to the aminoacyl-tRNA.EF-Tu.GTP complex up to the GTP hydrolysis stage on the ribosome. In Pseudomonas syringae pv. syringae (strain B728a), this protein is Elongation factor Ts.